Reading from the N-terminus, the 238-residue chain is TATA-box-binding protein (238 aa).

The tract at residues methionine 1–glycine 58 is disordered. A compositionally biased stretch (basic and acidic residues) spans glutamate 27 to aspartate 49. 2 consecutive repeat copies span residues leucine 65–isoleucine 141 and isoleucine 155–leucine 232.

This sequence belongs to the TBP family. In terms of assembly, belongs to the TFIID complex together with the TBP-associated factors (TAFs). Binds DNA as monomer.

It localises to the nucleus. Its function is as follows. General transcription factor that functions at the core of the DNA-binding multiprotein factor TFIID. Binding of TFIID to the TATA box is the initial transcriptional step of the pre-initiation complex (PIC), playing a role in the activation of eukaryotic genes transcribed by RNA polymerase II. The polypeptide is TATA-box-binding protein (TBP1) (Candida albicans (strain SC5314 / ATCC MYA-2876) (Yeast)).